Reading from the N-terminus, the 231-residue chain is Heptaprenylglyceryl phosphate synthase (231 aa).

Lys-12 provides a ligand contact to sn-glycerol 1-phosphate. The Mg(2+) site is built by Asp-14 and Thr-40. Sn-glycerol 1-phosphate is bound by residues 159–164, Gly-189, and 209–210; these read YLEYSG and GN.

The protein belongs to the GGGP/HepGP synthase family. Group I subfamily. As to quaternary structure, homodimer. The cofactor is Mg(2+).

It catalyses the reaction sn-glycerol 1-phosphate + all-trans-heptaprenyl diphosphate = 3-heptaprenyl-sn-glycero-1-phosphate + diphosphate. Its pathway is membrane lipid metabolism; glycerophospholipid metabolism. Functionally, prenyltransferase that catalyzes in vivo the transfer of the heptaprenyl moiety of heptaprenyl pyrophosphate (HepPP; 35 carbon atoms) to the C3 hydroxyl of sn-glycerol-1-phosphate (G1P), producing heptaprenylglyceryl phosphate (HepGP). This reaction is an ether-bond-formation step in the biosynthesis of archaea-type G1P-based membrane lipids found in Bacillales. The sequence is that of Heptaprenylglyceryl phosphate synthase from Staphylococcus haemolyticus (strain JCSC1435).